The chain runs to 398 residues: 1-deoxy-D-xylulose 5-phosphate reductoisomerase (398 aa).

Positions 10, 11, 12, 13, 36, 38, and 124 each coordinate NADPH. Lys-125 lines the 1-deoxy-D-xylulose 5-phosphate pocket. Glu-126 provides a ligand contact to NADPH. Asp-150 contacts Mn(2+). The 1-deoxy-D-xylulose 5-phosphate site is built by Ser-151, Glu-152, Ser-186, and His-209. Glu-152 lines the Mn(2+) pocket. Residue Gly-215 participates in NADPH binding. 4 residues coordinate 1-deoxy-D-xylulose 5-phosphate: Ser-222, Asn-227, Lys-228, and Glu-231. Glu-231 serves as a coordination point for Mn(2+).

It belongs to the DXR family. In terms of assembly, homodimer. The cofactor is Mg(2+). Mn(2+) serves as cofactor.

It carries out the reaction 2-C-methyl-D-erythritol 4-phosphate + NADP(+) = 1-deoxy-D-xylulose 5-phosphate + NADPH + H(+). It functions in the pathway isoprenoid biosynthesis; isopentenyl diphosphate biosynthesis via DXP pathway; isopentenyl diphosphate from 1-deoxy-D-xylulose 5-phosphate: step 1/6. Functionally, catalyzes the NADPH-dependent rearrangement and reduction of 1-deoxy-D-xylulose-5-phosphate (DXP) to 2-C-methyl-D-erythritol 4-phosphate (MEP). In Pectobacterium atrosepticum (strain SCRI 1043 / ATCC BAA-672) (Erwinia carotovora subsp. atroseptica), this protein is 1-deoxy-D-xylulose 5-phosphate reductoisomerase.